The following is a 473-amino-acid chain: Adenosylhomocysteinase (473 aa).

Substrate contacts are provided by T64, D139, and E199. 200 to 202 serves as a coordination point for NAD(+); it reads TTT. The substrate site is built by K229 and D233. NAD(+)-binding positions include N234, 263–268, E286, N321, 342–344, and N387; these read GYGDVG and IGH.

It belongs to the adenosylhomocysteinase family. NAD(+) serves as cofactor.

The protein resides in the cytoplasm. The catalysed reaction is S-adenosyl-L-homocysteine + H2O = L-homocysteine + adenosine. The protein operates within amino-acid biosynthesis; L-homocysteine biosynthesis; L-homocysteine from S-adenosyl-L-homocysteine: step 1/1. Functionally, may play a key role in the regulation of the intracellular concentration of adenosylhomocysteine. This Paraburkholderia xenovorans (strain LB400) protein is Adenosylhomocysteinase.